A 230-amino-acid polypeptide reads, in one-letter code: Somatolactin (230 aa).

The N-terminal stretch at 1–23 is a signal peptide; sequence MKKTTVLQVCMVFVVCSLQAVIG. 3 cysteine pairs are disulfide-bonded: C28/C38, C87/C202, and C219/C227. A glycan (N-linked (GlcNAc...) asparagine) is linked at N226.

The protein belongs to the somatotropin/prolactin family.

It is found in the secreted. The polypeptide is Somatolactin (Carassius auratus (Goldfish)).